The chain runs to 208 residues: Small ribosomal subunit protein eS8 (208 aa).

Residues 1-37 (MGISRDNWHKRRKTGGKRKPYHKKRKYEPGRPAANTK) form a disordered region. Residues 8 to 26 (WHKRRKTGGKRKPYHKKRK) are compositionally biased toward basic residues.

Belongs to the eukaryotic ribosomal protein eS8 family. As to quaternary structure, component of the small ribosomal subunit. Identified in a IGF2BP1-dependent mRNP granule complex containing untranslated mRNAs. Part of the small subunit (SSU) processome, composed of more than 70 proteins and the RNA chaperone small nucleolar RNA (snoRNA) U3.

It is found in the cytoplasm. The protein resides in the membrane. Its subcellular location is the nucleus. The protein localises to the nucleolus. Functionally, component of the small ribosomal subunit. The ribosome is a large ribonucleoprotein complex responsible for the synthesis of proteins in the cell. Part of the small subunit (SSU) processome, first precursor of the small eukaryotic ribosomal subunit. During the assembly of the SSU processome in the nucleolus, many ribosome biogenesis factors, an RNA chaperone and ribosomal proteins associate with the nascent pre-rRNA and work in concert to generate RNA folding, modifications, rearrangements and cleavage as well as targeted degradation of pre-ribosomal RNA by the RNA exosome. This Xenopus laevis (African clawed frog) protein is Small ribosomal subunit protein eS8 (rps8).